The sequence spans 363 residues: Peptide chain release factor 1 (363 aa).

Gln237 is modified (N5-methylglutamine).

This sequence belongs to the prokaryotic/mitochondrial release factor family. Post-translationally, methylated by PrmC. Methylation increases the termination efficiency of RF1.

The protein localises to the cytoplasm. Functionally, peptide chain release factor 1 directs the termination of translation in response to the peptide chain termination codons UAG and UAA. This is Peptide chain release factor 1 from Hydrogenovibrio crunogenus (strain DSM 25203 / XCL-2) (Thiomicrospira crunogena).